A 513-amino-acid polypeptide reads, in one-letter code: Putative ribose/galactose/methyl galactoside import ATP-binding protein (513 aa).

2 consecutive ABC transporter domains span residues 24 to 260 and 270 to 510; these read LSAE…VGRE and VPIG…VMEL. ATP is bound at residue 56 to 63; sequence GENGAGKS.

It belongs to the ABC transporter superfamily. Carbohydrate importer 2 (CUT2) (TC 3.A.1.2) family.

It is found in the cell inner membrane. The enzyme catalyses D-ribose(out) + ATP + H2O = D-ribose(in) + ADP + phosphate + H(+). It carries out the reaction D-galactose(out) + ATP + H2O = D-galactose(in) + ADP + phosphate + H(+). Part of an ABC transporter complex involved in carbohydrate import. Could be involved in ribose, galactose and/or methyl galactoside import. Responsible for energy coupling to the transport system. The chain is Putative ribose/galactose/methyl galactoside import ATP-binding protein from Rhizobium johnstonii (strain DSM 114642 / LMG 32736 / 3841) (Rhizobium leguminosarum bv. viciae).